A 188-amino-acid chain; its full sequence is Elongation factor P (188 aa).

Lysine 34 is modified (N6-(3,6-diaminohexanoyl)-5-hydroxylysine).

The protein belongs to the elongation factor P family. May be beta-lysylated on the epsilon-amino group of Lys-34 by the combined action of EpmA and EpmB, and then hydroxylated on the C5 position of the same residue by EpmC (if this protein is present). Lysylation is critical for the stimulatory effect of EF-P on peptide-bond formation. The lysylation moiety may extend toward the peptidyltransferase center and stabilize the terminal 3-CCA end of the tRNA. Hydroxylation of the C5 position on Lys-34 may allow additional potential stabilizing hydrogen-bond interactions with the P-tRNA.

Its subcellular location is the cytoplasm. The protein operates within protein biosynthesis; polypeptide chain elongation. Functionally, involved in peptide bond synthesis. Alleviates ribosome stalling that occurs when 3 or more consecutive Pro residues or the sequence PPG is present in a protein, possibly by augmenting the peptidyl transferase activity of the ribosome. Modification of Lys-34 is required for alleviation. The polypeptide is Elongation factor P (Xanthomonas oryzae pv. oryzae (strain MAFF 311018)).